The primary structure comprises 310 residues: Ribosomal RNA small subunit methyltransferase H (310 aa).

S-adenosyl-L-methionine contacts are provided by residues G32–H34, D52, F79, D100, and Q107.

Belongs to the methyltransferase superfamily. RsmH family.

It is found in the cytoplasm. It carries out the reaction cytidine(1402) in 16S rRNA + S-adenosyl-L-methionine = N(4)-methylcytidine(1402) in 16S rRNA + S-adenosyl-L-homocysteine + H(+). Functionally, specifically methylates the N4 position of cytidine in position 1402 (C1402) of 16S rRNA. This is Ribosomal RNA small subunit methyltransferase H from Bacillus cytotoxicus (strain DSM 22905 / CIP 110041 / 391-98 / NVH 391-98).